The primary structure comprises 291 residues: Elongation factor Ts (291 aa).

Positions 80–83 are involved in Mg(2+) ion dislocation from EF-Tu; sequence TDFV.

It belongs to the EF-Ts family.

Its subcellular location is the cytoplasm. In terms of biological role, associates with the EF-Tu.GDP complex and induces the exchange of GDP to GTP. It remains bound to the aminoacyl-tRNA.EF-Tu.GTP complex up to the GTP hydrolysis stage on the ribosome. This Acinetobacter baumannii (strain AB307-0294) protein is Elongation factor Ts.